Here is a 53-residue protein sequence, read N- to C-terminus: Large ribosomal subunit protein eL40 (53 aa).

Belongs to the eukaryotic ribosomal protein eL40 family.

The sequence is that of Large ribosomal subunit protein eL40 from Staphylothermus marinus (strain ATCC 43588 / DSM 3639 / JCM 9404 / F1).